Consider the following 640-residue polypeptide: 1-deoxy-D-xylulose-5-phosphate synthase (640 aa).

Residues His79 and 120-122 each bind thiamine diphosphate; that span reads AHS. Asp151 serves as a coordination point for Mg(2+). Residues 152–153, Asn180, Tyr289, and Glu371 each bind thiamine diphosphate; that span reads GA. Asn180 lines the Mg(2+) pocket.

The protein belongs to the transketolase family. DXPS subfamily. Homodimer. Requires Mg(2+) as cofactor. Thiamine diphosphate serves as cofactor.

The catalysed reaction is D-glyceraldehyde 3-phosphate + pyruvate + H(+) = 1-deoxy-D-xylulose 5-phosphate + CO2. The protein operates within metabolic intermediate biosynthesis; 1-deoxy-D-xylulose 5-phosphate biosynthesis; 1-deoxy-D-xylulose 5-phosphate from D-glyceraldehyde 3-phosphate and pyruvate: step 1/1. Functionally, catalyzes the acyloin condensation reaction between C atoms 2 and 3 of pyruvate and glyceraldehyde 3-phosphate to yield 1-deoxy-D-xylulose-5-phosphate (DXP). The protein is 1-deoxy-D-xylulose-5-phosphate synthase of Erythrobacter litoralis (strain HTCC2594).